Consider the following 376-residue polypeptide: uncharacterized protein (376 aa).

Belongs to the YCR102c/YLR460c/YNL134c family.

This is an uncharacterized protein from Saccharomyces cerevisiae (strain ATCC 204508 / S288c) (Baker's yeast).